A 502-amino-acid polypeptide reads, in one-letter code: Probable cytochrome P450 28d1 (502 aa).

Cys446 contributes to the heme binding site.

It belongs to the cytochrome P450 family. It depends on heme as a cofactor.

It is found in the endoplasmic reticulum membrane. Its subcellular location is the microsome membrane. May be involved in the metabolism of insect hormones and in the breakdown of synthetic insecticides. The protein is Probable cytochrome P450 28d1 (Cyp28d1) of Drosophila melanogaster (Fruit fly).